The primary structure comprises 493 residues: MNSTSLYAAIDLGSNSFHMLVVREAAGSIQTLTRIKRKVRLAAGLNNDNHLSAEAMERGWQCLRLFAERLQDIPQPQIRVVATATLRLAVNAGEFIAKAQTILGCPVQVISGEEEARLIYQGVAHTTGGADQRLVVDIGGASTELVTGTGAQTTSLFSLSMGCVTWLERYFSDRNLAQENFDDAEKAARDVLRPVADELRFHGWKVCVGASGTVQALQEIMMAQGMDERITLAKLQQLKQRAIQCGRLEELEIEGLTLERALVFPSGLAILIAIFTELNIQSMTLAGGALREGLVYGMLHLAVDQDIRSRTLRNIQRRFIVDTEQANRVAKLADNFLKQVENAWHIEPISRELLLSACQLHEIGLSVDFKQAPYHAAYLVRHLDLPGYTPAQKKLLATLLLNQTNPVDLSSLHQQNAVPPRVAEQLCRLLRLAILFAGRRRDDLVPEITLQALNENLTLTLPGDWLAHHPLGKELIDQESQWQSYVHWPLDVR.

The protein belongs to the GppA/Ppx family. GppA subfamily.

The catalysed reaction is guanosine 3'-diphosphate 5'-triphosphate + H2O = guanosine 3',5'-bis(diphosphate) + phosphate + H(+). The protein operates within purine metabolism; ppGpp biosynthesis; ppGpp from GTP: step 2/2. Its function is as follows. Catalyzes the conversion of pppGpp to ppGpp. Guanosine pentaphosphate (pppGpp) is a cytoplasmic signaling molecule which together with ppGpp controls the 'stringent response', an adaptive process that allows bacteria to respond to amino acid starvation, resulting in the coordinated regulation of numerous cellular activities. In Salmonella heidelberg (strain SL476), this protein is Guanosine-5'-triphosphate,3'-diphosphate pyrophosphatase.